We begin with the raw amino-acid sequence, 334 residues long: Antho-RFamide neuropeptides (334 aa).

The first 26 residues, 1–26, serve as a signal peptide directing secretion; it reads MLVAMTTASYVTILVTLLFHILTINA. Residues 27–116 constitute a propeptide that is removed on maturation; that stretch reads KTVTKRAKET…REFQGRFGRE (90 aa). Composition is skewed to basic and acidic residues over residues 115 to 289 and 303 to 334; these read REQG…RELL and PQTR…ANKS. Positions 115–334 are disordered; sequence REQGRFGREE…ESNDEEANKS (220 aa). F120 is modified (phenylalanine amide). A propeptide spanning residues 122-125 is cleaved from the precursor; the sequence is REED. F129 is subject to Phenylalanine amide. A propeptide spanning residues 131–134 is cleaved from the precursor; that stretch reads REED. Residue F138 is modified to Phenylalanine amide. Positions 140-142 are excised as a propeptide; the sequence is REE. A Phenylalanine amide modification is found at F146. The propeptide occupies 148–151; the sequence is REED. F155 is subject to Phenylalanine amide. Positions 157-160 are excised as a propeptide; it reads REED. Position 164 is a phenylalanine amide (F164). Residues 166–169 constitute a propeptide that is removed on maturation; the sequence is REED. F173 carries the phenylalanine amide modification. Residues 175 to 178 constitute a propeptide that is removed on maturation; it reads REEE. Position 182 is a phenylalanine amide (F182). Residues 184-187 constitute a propeptide that is removed on maturation; it reads REED. F191 is modified (phenylalanine amide). A propeptide spanning residues 193-196 is cleaved from the precursor; it reads REEE. F200 carries the phenylalanine amide modification. The propeptide occupies 202 to 205; sequence REED. F209 is subject to Phenylalanine amide. Positions 211–214 are excised as a propeptide; it reads REED. Phenylalanine amide is present on F218. A propeptide spanning residues 220–223 is cleaved from the precursor; the sequence is REEE. Residue F227 is modified to Phenylalanine amide. Residues 229-233 constitute a propeptide that is removed on maturation; the sequence is KRDED. F237 carries the post-translational modification Phenylalanine amide. The propeptide occupies 239–242; the sequence is KRED. The residue at position 246 (F246) is a Phenylalanine amide. A propeptide spanning residues 248–252 is cleaved from the precursor; sequence KRDED. Position 256 is a phenylalanine amide (F256). The propeptide occupies 258-262; that stretch reads KRDED. Position 266 is a phenylalanine amide (F266). The propeptide occupies 268–271; the sequence is KRED. Position 275 is a phenylalanine amide (F275). A propeptide spanning residues 277 to 280 is cleaved from the precursor; that stretch reads KRED. F284 carries the phenylalanine amide modification. Residues 286 to 334 constitute a propeptide that is removed on maturation; that stretch reads RELLAKLNKRTTSIQEDPQTRFRDVQMTRRNVAKKDKIEESNDEEANKS.

This sequence belongs to the FARP (FMRFamide related peptide) family. As to expression, neurons associated with smooth muscle fibers.

It localises to the secreted. In terms of biological role, not known but it could act as a transmitter at neuromuscular synapses. This Calliactis parasitica (Sea anemone) protein is Antho-RFamide neuropeptides.